A 436-amino-acid chain; its full sequence is MSMFLDTAKIKVKAGNGGDGMVAFRREKYVPNGGPWGGDGGRGGNVVFVVDEGLRTLMDFRYNRHFKADSGEKGMTKGMHGRGAEDLRVRVPQGTTVRDAETGKVLTDLIEHGQEFIVAHGGRGGRGNIRFATPKNPAPEISENGEPGQERELQLELKILADVGLVGFPSVGKSTLLSVITSAKPKIGAYHFTTIVPNLGMVRTQSGESFAVADLPGLIEGASQGVGLGTQFLRHIERTRVILHIIDMSASEGRDPYEDYLAINKELESYNLRLMERPQIIVTNKMDMPESQENLEEFKKKLAENYDEFEELPAIFPISGLTKQGLATLLDATAELLDKTPEFLLYDESDMEEEVYYGFDEEEKAFEISRDDDATWVLSGEKLMKLFNMTNFDRDESVMKFARQLRGMGVDEALRARGAKDGDLVRIGKFEFEFVD.

One can recognise an Obg domain in the interval 2–160; sequence SMFLDTAKIK…RELQLELKIL (159 aa). Positions 161–338 constitute an OBG-type G domain; it reads ADVGLVGFPS…LLDATAELLD (178 aa). Residues 167–174, 192–196, 214–217, 284–287, and 319–321 each bind GTP; these read GFPSVGKS, FTTIV, DLPG, NKMD, and SGL. S174 and T194 together coordinate Mg(2+). An OCT domain is found at 358-436; that stretch reads GFDEEEKAFE…IGKFEFEFVD (79 aa).

It belongs to the TRAFAC class OBG-HflX-like GTPase superfamily. OBG GTPase family. Monomer. Mg(2+) serves as cofactor.

It is found in the cytoplasm. Functionally, an essential GTPase which binds GTP, GDP and possibly (p)ppGpp with moderate affinity, with high nucleotide exchange rates and a fairly low GTP hydrolysis rate. Plays a role in control of the cell cycle, stress response, ribosome biogenesis and in those bacteria that undergo differentiation, in morphogenesis control. This Streptococcus pneumoniae serotype 2 (strain D39 / NCTC 7466) protein is GTPase Obg.